Reading from the N-terminus, the 354-residue chain is Probable dual-specificity RNA methyltransferase RlmN (354 aa).

Glu-94 functions as the Proton acceptor in the catalytic mechanism. A Radical SAM core domain is found at Gly-103–Arg-332. Cysteines 110 and 343 form a disulfide. Residues Cys-117, Cys-121, and Cys-124 each coordinate [4Fe-4S] cluster. Residues Gly-169–Glu-170, Ser-201, Ser-224–His-226, and Asn-300 each bind S-adenosyl-L-methionine. Residue Cys-343 is the S-methylcysteine intermediate of the active site.

The protein belongs to the radical SAM superfamily. RlmN family. Requires [4Fe-4S] cluster as cofactor.

It is found in the cytoplasm. It carries out the reaction adenosine(2503) in 23S rRNA + 2 reduced [2Fe-2S]-[ferredoxin] + 2 S-adenosyl-L-methionine = 2-methyladenosine(2503) in 23S rRNA + 5'-deoxyadenosine + L-methionine + 2 oxidized [2Fe-2S]-[ferredoxin] + S-adenosyl-L-homocysteine. It catalyses the reaction adenosine(37) in tRNA + 2 reduced [2Fe-2S]-[ferredoxin] + 2 S-adenosyl-L-methionine = 2-methyladenosine(37) in tRNA + 5'-deoxyadenosine + L-methionine + 2 oxidized [2Fe-2S]-[ferredoxin] + S-adenosyl-L-homocysteine. In terms of biological role, specifically methylates position 2 of adenine 2503 in 23S rRNA and position 2 of adenine 37 in tRNAs. This is Probable dual-specificity RNA methyltransferase RlmN from Moorella thermoacetica (strain ATCC 39073 / JCM 9320).